A 400-amino-acid chain; its full sequence is EARP-interacting protein homolog (400 aa).

The segment at 95–114 is disordered; sequence NNNSNNTNNNDNTNNNTNNN. Residues 96 to 114 show a composition bias toward low complexity; it reads NNSNNTNNNDNTNNNTNNN. WD repeat units follow at residues 138–178, 227–267, and 271–311; these read GHTG…NEPT, AHSE…DPVK, and GHNH…SAFN. A compositionally biased stretch (low complexity) spans 314 to 333; the sequence is NNISNSNEQQHSQQPNEQQP. A disordered region spans residues 314-348; it reads NNISNSNEQQHSQQPNEQQPQQPPQPVKQKKNKRN. One copy of the WD 4 repeat lies at 358 to 397; it reads EHEDSVYNISWSSSNFLFASLSYDGRFVVNNVPKEYSDIL.

The protein belongs to the WD repeat EIPR1 family.

This Dictyostelium discoideum (Social amoeba) protein is EARP-interacting protein homolog.